The primary structure comprises 146 residues: Protein archease (146 aa).

D16, D145, and I146 together coordinate Ca(2+).

This sequence belongs to the archease family.

Its function is as follows. Activates the tRNA-splicing ligase complex by facilitating the enzymatic turnover of catalytic subunit RtcB. Acts by promoting the guanylylation of RtcB, a key intermediate step in tRNA ligation. Can also alter the NTP specificity of RtcB such that ATP, dGTP or ITP is used efficiently. This is Protein archease from Methanosarcina acetivorans (strain ATCC 35395 / DSM 2834 / JCM 12185 / C2A).